Reading from the N-terminus, the 147-residue chain is 3-dehydroquinate dehydratase (147 aa).

Y23 (proton acceptor) is an active-site residue. N75, H81, and D88 together coordinate substrate. H101 acts as the Proton donor in catalysis. Residues 102–103 (LS) and R112 contribute to the substrate site.

Belongs to the type-II 3-dehydroquinase family. As to quaternary structure, homododecamer.

It carries out the reaction 3-dehydroquinate = 3-dehydroshikimate + H2O. Its pathway is metabolic intermediate biosynthesis; chorismate biosynthesis; chorismate from D-erythrose 4-phosphate and phosphoenolpyruvate: step 3/7. In terms of biological role, catalyzes a trans-dehydration via an enolate intermediate. In Nitrosococcus oceani (strain ATCC 19707 / BCRC 17464 / JCM 30415 / NCIMB 11848 / C-107), this protein is 3-dehydroquinate dehydratase.